We begin with the raw amino-acid sequence, 277 residues long: Insulin-induced gene 1 protein (277 aa).

The Cytoplasmic segment spans residues 1-84 (MPRLHDHFWS…PYPNTWHHRL (84 aa)). Positions 51-66 (HGAPDADPAPRGRSAA) are enriched in low complexity. Residues 51–73 (HGAPDADPAPRGRSAAMSGPEPG) form a disordered region. Residues 85-107 (LQRSLVLFSVGVVLALVLNLLQI) traverse the membrane as a helical segment. The Lumenal segment spans residues 108 to 126 (QRNVTLFPEEVIATIFSSA). Residues 127–144 (WWVPPCCGTAAAVVGLLY) traverse the membrane as a helical segment. The Cytoplasmic portion of the chain corresponds to 145–159 (PCIDSHLGEPHKFKR). Glycyl lysine isopeptide (Lys-Gly) (interchain with G-Cter in ubiquitin) cross-links involve residues K156 and K158. Residues 160–182 (EWASVMRCIAVFVGINHASAKLD) traverse the membrane as a helical segment. Topologically, residues 183–185 (FAN) are lumenal. Residues 186 to 204 (NVQLSLTLAALSLGLWWTF) traverse the membrane as a helical segment. At 205 to 209 (DRSRS) the chain is on the cytoplasmic side. S207 is subject to Phosphoserine; by PCK1. Residues 210-231 (GLGLGITIAFLATLITQFLVYN) form a helical membrane-spanning segment. Residues 232–245 (GVYQYTSPDFLYIR) are Lumenal-facing. Residues 246-263 (SWLPCIFFSGGVTVGNIG) form a helical membrane-spanning segment. Residues 264 to 277 (RQLAMGVPEKPHSD) lie on the Cytoplasmic side of the membrane. Positions 271–277 (PEKPHSD) match the KxHxx motif.

It belongs to the INSIG family. Interacts with SCAP; interaction is direct and only takes place in the presence of sterols; it prevents interaction between SCAP and the coat protein complex II (COPII). Associates with the SCAP-SREBP complex (composed of SCAP and SREBF1/SREBP1 or SREBF2/SREBP2); association is mediated via its interaction with SCAP and only takes place in the presence of sterols. Interaction with SCAP is mutually exclusive with PAQR3. Interacts with HMGCR (via its SSD); the interaction, accelerated by sterols, leads to the recruitment of HMGCR to AMFR/gp78 for its ubiquitination by the sterol-mediated ERAD pathway. Interacts with AMFR/gp78 (via its membrane domain); the interaction recruits HMCR at the ER membrane for its ubiquitination and degradation by the sterol-mediated ERAD pathway. Interacts with SOAT2/ACAT2; leading to promote recruitment of AMFR/gp78 and subsequent ubiquitination of SOAT2/ACAT2. Interacts with RNF139. Interacts with RNF145. Post-translationally, phosphorylation at Ser-207 by PCK1 reduces binding to oxysterol, disrupting the interaction between INSIG1 and SCAP, thereby promoting nuclear translocation of SREBP proteins (SREBF1/SREBP1 or SREBF2/SREBP2) and subsequent transcription of downstream lipogenesis-related genes. Ubiquitinated by AMFR/gp78 in response to sterol deprivation, leading to its degradation: when the SCAP-SREBP complex becomes dissociated from INSIG1, INSIG1 is then ubiquitinated and degraded in proteasomes. Although ubiquitination is required for rapid INSIG1 degradation, it is not required for release of the SCAP-SREBP complex. Ubiquitinated by RNF139. Expressed in all tissues tested with highest expression in the liver.

It localises to the endoplasmic reticulum membrane. Its function is as follows. Oxysterol-binding protein that mediates feedback control of cholesterol synthesis by controlling both endoplasmic reticulum to Golgi transport of SCAP and degradation of HMGCR. Acts as a negative regulator of cholesterol biosynthesis by mediating the retention of the SCAP-SREBP complex in the endoplasmic reticulum, thereby blocking the processing of sterol regulatory element-binding proteins (SREBPs) SREBF1/SREBP1 and SREBF2/SREBP2. Binds oxysterol, including 25-hydroxycholesterol, regulating interaction with SCAP and retention of the SCAP-SREBP complex in the endoplasmic reticulum. In presence of oxysterol, interacts with SCAP, retaining the SCAP-SREBP complex in the endoplasmic reticulum, thereby preventing SCAP from escorting SREBF1/SREBP1 and SREBF2/SREBP2 to the Golgi. Sterol deprivation or phosphorylation by PCK1 reduce oxysterol-binding, disrupting the interaction between INSIG1 and SCAP, thereby promoting Golgi transport of the SCAP-SREBP complex, followed by processing and nuclear translocation of SREBF1/SREBP1 and SREBF2/SREBP2. Also regulates cholesterol synthesis by regulating degradation of HMGCR: initiates the sterol-mediated ubiquitin-mediated endoplasmic reticulum-associated degradation (ERAD) of HMGCR via recruitment of the reductase to the ubiquitin ligases AMFR/gp78 and/or RNF139. Also regulates degradation of SOAT2/ACAT2 when the lipid levels are low: initiates the ubiquitin-mediated degradation of SOAT2/ACAT2 via recruitment of the ubiquitin ligases AMFR/gp78. The polypeptide is Insulin-induced gene 1 protein (Homo sapiens (Human)).